Here is a 243-residue protein sequence, read N- to C-terminus: Vesicle-associated membrane protein-associated protein B (243 aa).

Position 2 is an N-acetylalanine (alanine 2). Residues 2 to 218 (AKVEQVLSLE…AALAASGKEE (217 aa)) lie on the Cytoplasmic side of the membrane. The MSP domain maps to 7 to 124 (VLSLEPQHEL…MDSKLRCVFE (118 aa)). At serine 146 the chain carries Phosphoserine. A Glycyl lysine isopeptide (Lys-Gly) (interchain with G-Cter in SUMO1) cross-link involves residue lysine 147. Serine 159 bears the Phosphoserine mark. Positions 161–196 (LDDAEVKKVMEECRRLQGEVQRLREESRQLKEEDGL) form a coiled coil. Serine 206 is modified (phosphoserine). The helical; Anchor for type IV membrane protein transmembrane segment at 219–239 (GLSARLLALVVLFFIVGVIIG) threads the bilayer.

Belongs to the VAMP-associated protein (VAP) (TC 9.B.17) family. As to quaternary structure, homodimer, and heterodimer with VAPA. Interacts with VAMP1 and VAMP2. Interacts (via MSP domain) with ZFYVE27. Interacts with RMDN3. Interacts with KIF5A in a ZFYVE27-dependent manner. Interacts (via MSP domain) with STARD3 (via phospho-FFAT motif). Interacts with STARD3NL (via FFAT motif). Interacts with CERT1. Interacts with PLEKHA3 and SACM1L to form a ternary complex. Interacts with VPS13A (via FFAT motif). Interacts with RB1CC1 (via phosphorylated FFAT motif), MIGA2 (via phosphorylated FFAT motif), RMDN3 (via phosphorylated FFAT motif), OSBPL1A (via FFAT motif), KCNB1 (via phosphorylated FFAT motif) and KCNB2 (via phosphorylated FFAT motif). Interacts (via MSP domain) with WDR44; the interactions connect the endoplasmic reticulum (ER) with the endosomal tubule. In terms of tissue distribution, ubiquitous.

It is found in the endoplasmic reticulum membrane. Its function is as follows. Endoplasmic reticulum (ER)-anchored protein that mediates the formation of contact sites between the ER and endosomes via interaction with FFAT motif-containing proteins such as STARD3 or WDR44. Interacts with STARD3 in a FFAT motif phosphorylation dependent manner. Via interaction with WDR44 participates in neosynthesized protein export. Participates in the endoplasmic reticulum unfolded protein response (UPR) by inducing ERN1/IRE1 activity. Involved in cellular calcium homeostasis regulation. The sequence is that of Vesicle-associated membrane protein-associated protein B from Rattus norvegicus (Rat).